Here is a 112-residue protein sequence, read N- to C-terminus: Small ribosomal subunit protein bS6 (112 aa).

Belongs to the bacterial ribosomal protein bS6 family.

Binds together with bS18 to 16S ribosomal RNA. This is Small ribosomal subunit protein bS6 from Christiangramia forsetii (strain DSM 17595 / CGMCC 1.15422 / KT0803) (Gramella forsetii).